The sequence spans 269 residues: Ribonuclease HII (269 aa).

One can recognise an RNase H type-2 domain in the interval 83-269; sequence YLIAGVDEVG…HRMSFLTNIL (187 aa). Positions 89, 90, and 185 each coordinate a divalent metal cation.

This sequence belongs to the RNase HII family. The cofactor is Mn(2+). Mg(2+) serves as cofactor.

It localises to the cytoplasm. The enzyme catalyses Endonucleolytic cleavage to 5'-phosphomonoester.. Functionally, endonuclease that specifically degrades the RNA of RNA-DNA hybrids. The sequence is that of Ribonuclease HII from Clostridium botulinum (strain Loch Maree / Type A3).